The sequence spans 140 residues: FAD synthase (140 aa).

ATP contacts are provided by residues Thr-10 to Phe-11, His-15 to His-18, and Asn-93.

Belongs to the archaeal FAD synthase family. As to quaternary structure, homodimer. A divalent metal cation serves as cofactor.

It carries out the reaction FMN + ATP + H(+) = FAD + diphosphate. It functions in the pathway cofactor biosynthesis; FAD biosynthesis; FAD from FMN: step 1/1. Catalyzes the transfer of the AMP portion of ATP to flavin mononucleotide (FMN) to produce flavin adenine dinucleotide (FAD) coenzyme. The chain is FAD synthase from Methanocella arvoryzae (strain DSM 22066 / NBRC 105507 / MRE50).